Consider the following 226-residue polypeptide: Leucyl/phenylalanyl-tRNA--protein transferase (226 aa).

It belongs to the L/F-transferase family.

The protein localises to the cytoplasm. It carries out the reaction N-terminal L-lysyl-[protein] + L-leucyl-tRNA(Leu) = N-terminal L-leucyl-L-lysyl-[protein] + tRNA(Leu) + H(+). It catalyses the reaction N-terminal L-arginyl-[protein] + L-leucyl-tRNA(Leu) = N-terminal L-leucyl-L-arginyl-[protein] + tRNA(Leu) + H(+). The enzyme catalyses L-phenylalanyl-tRNA(Phe) + an N-terminal L-alpha-aminoacyl-[protein] = an N-terminal L-phenylalanyl-L-alpha-aminoacyl-[protein] + tRNA(Phe). Functionally, functions in the N-end rule pathway of protein degradation where it conjugates Leu, Phe and, less efficiently, Met from aminoacyl-tRNAs to the N-termini of proteins containing an N-terminal arginine or lysine. This is Leucyl/phenylalanyl-tRNA--protein transferase from Pseudomonas aeruginosa (strain LESB58).